The sequence spans 387 residues: Exodeoxyribonuclease 7 large subunit (387 aa).

It belongs to the XseA family. In terms of assembly, heterooligomer composed of large and small subunits.

Its subcellular location is the cytoplasm. It catalyses the reaction Exonucleolytic cleavage in either 5'- to 3'- or 3'- to 5'-direction to yield nucleoside 5'-phosphates.. Bidirectionally degrades single-stranded DNA into large acid-insoluble oligonucleotides, which are then degraded further into small acid-soluble oligonucleotides. The sequence is that of Exodeoxyribonuclease 7 large subunit from Campylobacter jejuni subsp. jejuni serotype O:2 (strain ATCC 700819 / NCTC 11168).